A 24-amino-acid chain; its full sequence is Calreticulin (24 aa).

Belongs to the calreticulin family. As to quaternary structure, monomer. Component of an EIF2 complex at least composed of CELF1/CUGBP1, CALR, CALR3, EIF2S1, EIF2S2, HSP90B1 and HSPA5. Interacts with PDIA3/ERp57 and SPACA9. Interacts with TRIM21. Interacts with NR3C1. Interacts with PPIB. Interacts (via P-domain) with PDIA5. Interacts with CLCC1. Pancreas.

The protein resides in the endoplasmic reticulum lumen. It is found in the cytoplasm. The protein localises to the cytosol. It localises to the cytolytic granule. Its subcellular location is the secreted. The protein resides in the extracellular space. It is found in the extracellular matrix. The protein localises to the cell surface. It localises to the sarcoplasmic reticulum lumen. Its subcellular location is the cytoplasmic vesicle. The protein resides in the secretory vesicle. It is found in the cortical granule. Calcium-binding chaperone that promotes folding, oligomeric assembly and quality control in the endoplasmic reticulum (ER) via the calreticulin/calnexin cycle. This lectin interacts transiently with almost all of the monoglucosylated glycoproteins that are synthesized in the ER. Interacts with the DNA-binding domain of NR3C1 and mediates its nuclear export. Involved in maternal gene expression regulation. May participate in oocyte maturation via the regulation of calcium homeostasis. Present in the cortical granules of non-activated oocytes, is exocytosed during the cortical reaction in response to oocyte activation and might participate in the block to polyspermy. This is Calreticulin (CALR) from Canis lupus familiaris (Dog).